Here is an 89-residue protein sequence, read N- to C-terminus: Small ribosomal subunit protein uS15 (89 aa).

Residues 1–25 form a disordered region; sequence MSLSAEQKGEIVKKHARTASDTGSP.

This sequence belongs to the universal ribosomal protein uS15 family. In terms of assembly, part of the 30S ribosomal subunit. Forms a bridge to the 50S subunit in the 70S ribosome, contacting the 23S rRNA.

Functionally, one of the primary rRNA binding proteins, it binds directly to 16S rRNA where it helps nucleate assembly of the platform of the 30S subunit by binding and bridging several RNA helices of the 16S rRNA. Its function is as follows. Forms an intersubunit bridge (bridge B4) with the 23S rRNA of the 50S subunit in the ribosome. This Alkalilimnicola ehrlichii (strain ATCC BAA-1101 / DSM 17681 / MLHE-1) protein is Small ribosomal subunit protein uS15.